The following is a 215-amino-acid chain: UPF0502 protein CKO_01995 (215 aa).

Belongs to the UPF0502 family.

The protein is UPF0502 protein CKO_01995 of Citrobacter koseri (strain ATCC BAA-895 / CDC 4225-83 / SGSC4696).